Here is a 535-residue protein sequence, read N- to C-terminus: Butyrophilin-like protein 9 (535 aa).

The N-terminal stretch at 1-34 is a signal peptide; the sequence is MVDLSVSPDSLKPVSLTSSLVFLMHLLLLQPGEP. At 35–256 the chain is on the extracellular side; sequence SSEVKVLGPE…VFVPGASAWK (222 aa). The region spanning 54-135 is the Ig-like V-type domain; that stretch reads EVEFPCHLWP…SDKGTYGCRF (82 aa). Cys59 and Cys133 form a disulfide bridge. 3 N-linked (GlcNAc...) asparagine glycosylation sites follow: Asn102, Asn139, and Asn224. The helical transmembrane segment at 257–277 threads the bilayer; sequence SAFVATLPLLLVLAALALGVL. Residues 276–315 are a coiled coil; sequence VLRKQRRSREKLRKQAEKRQEKLTAELEKLQTELDWRRAE. Residues 278–535 lie on the Cytoplasmic side of the membrane; the sequence is RKQRRSREKL…EPADPALDWW (258 aa). In terms of domain architecture, B30.2/SPRY spans 310–509; it reads DWRRAEGQAE…LTICPLPVRG (200 aa). Residues 340–367 are disordered; it reads SLEVSEDGKSVSSRGAPPGPAPGHPQRF.

It belongs to the immunoglobulin superfamily. BTN/MOG family.

Its subcellular location is the membrane. The chain is Butyrophilin-like protein 9 (BTNL9) from Homo sapiens (Human).